The following is a 1105-amino-acid chain: MAAAGSAGLPATVSEKQEFYQLLKNLINPSCMVRRQAEEVYENIPGLCKTTFLLDAVRNRRAGYEVRQMAAALLRRLLSSGFEEVYPNLPPEVQRDVKIELILAVKLETHASMRKKLCDIFAVLARNLIDESGTNHWPEGLKFLIDSIHSKNVVLWEVALHVFWHFPGIFGNQDRHDLDIIKRLLDQCIQDQEHPAIRTLSARAAATFVLANENNIALFKDFADLLPGILQAVNDSCYQDDDSVLESLVEIADTVPKYLGPYLEDTLQLSLKLCGDSRLSNLQRQLALEVIVTLSETATPMLKKHTNIIAQAVPHILAMMVDLQDDDDWVNADEMEEDDFDSNAVAAESALDRLACGLGGKVVLPMTKEHIMQMLQSPDWKCRHAGLMALSAIGEGCHQQMEPILDETVNSVLLFLQDPHPRVRAAACTTLGQMATDFAPSFQKKFHEIVITALLRTMENQGNQRVQSHAASALVIFIEDCPKSLLILYLENMVKSLHSILVIKLQELIRNGTKLALEQLVTTIASVADAIEESFIPYYDIFMPSLKHVVELAVQKELKLLRGKTIECISHVGLAVGKEKFMQDASNVMQLLLKTQSDLNNMEDDDPQTSYMVSAWARMCKILGKDFEQYLPLVIEPLIKTASAKPDVALLDTQDVENMSDDDGWQFVNLGDQQSFGIKTSGLEAKATACQMLVYYAKELREGFVEYTEQVVKMMVPLLKFYFHDNVRVAAAEAMPFLLECARIRGSEYLSQMWQFICDPLIKAIGTEPDTDVLSEIMNSFAKSIEVMGDGCLNDEHLEELGGILKAKLEGHFKNQELRQVKRQEENYDQQVEMSLQDEDECDVYILTKVSDILHSLFSTYKEKILPWFEQLLPLIVNLICSSRPWPDRQWGLCIFDDIIEHCSPTSFKYVEYFRWPMLLNMRDNNPEVRQAAAYGLGVMAQFGGDDYRSLCSEAVPLLVKVIKCANSKTKKNVIATENCISAIGKILKFKPNCVNVDEVLPHWLSWLPLHEDKEEAIQTLNFLCDLIESNHPVVIGPNNSNLPKIISIIAEGKINETISHEDPCAKRLANVVRQIQTSEELWLECTSQLDDEQQEALHELLSFA.

Alanine 2 carries the N-acetylalanine modification. HEAT repeat units lie at residues 219 to 257, 361 to 399, 402 to 440, 444 to 483, 866 to 905, 908 to 946, and 949 to 987; these read FKDFADLLPGILQAVNDSCYQDDDSVLESLVEIADTVPK, KVVLPMTKEHIMQMLQSPDWKCRHAGLMALSAIGEGCHQ, EPILDETVNSVLLFLQDPHPRVRAAACTTLGQMATDFAP, KKFHEIVITALLRTMENQGNQRVQSHAASALVIFIEDCPK, LPWFEQLLPLIVNLICSSRPWPDRQWGLCIFDDIIEHCSP, FKYVEYFRWPMLLNMRDNNPEVRQAAAYGLGVMAQFGGD, and RSLCSEAVPLLVKVIKCANSKTKKNVIATENCISAIGKI.

The protein belongs to the importin beta family.

Its subcellular location is the cytoplasm. The protein localises to the nucleus. In terms of biological role, may function in nuclear protein import as nuclear transport receptor. In Mus musculus (Mouse), this protein is Ran-binding protein 6 (Ranbp6).